The primary structure comprises 207 residues: Ribosomal RNA small subunit methyltransferase G (207 aa).

S-adenosyl-L-methionine is bound by residues Gly-74, Phe-79, 124-125 (VE), and Arg-138.

It belongs to the methyltransferase superfamily. RNA methyltransferase RsmG family.

Its subcellular location is the cytoplasm. The enzyme catalyses guanosine(527) in 16S rRNA + S-adenosyl-L-methionine = N(7)-methylguanosine(527) in 16S rRNA + S-adenosyl-L-homocysteine. Specifically methylates the N7 position of guanine in position 527 of 16S rRNA. The polypeptide is Ribosomal RNA small subunit methyltransferase G (Hyphomonas neptunium (strain ATCC 15444)).